Reading from the N-terminus, the 451-residue chain is Acetylornithine aminotransferase, mitochondrial (451 aa).

Residue Lys302 is modified to N6-(pyridoxal phosphate)lysine.

Belongs to the class-III pyridoxal-phosphate-dependent aminotransferase family. It depends on pyridoxal 5'-phosphate as a cofactor. Found at highest levels in nodules, confined to the infected cells.

The protein localises to the mitochondrion. It carries out the reaction N(2)-acetyl-L-ornithine + 2-oxoglutarate = N-acetyl-L-glutamate 5-semialdehyde + L-glutamate. It functions in the pathway amino-acid biosynthesis; L-arginine biosynthesis; N(2)-acetyl-L-ornithine from L-glutamate: step 4/4. In terms of biological role, involved in the biosynthesis of citrulline. The protein is Acetylornithine aminotransferase, mitochondrial (AG118) of Alnus glutinosa (European alder).